Here is a 274-residue protein sequence, read N- to C-terminus: Putative hydro-lyase SAV_6940 (274 aa).

It belongs to the D-glutamate cyclase family.

This Streptomyces avermitilis (strain ATCC 31267 / DSM 46492 / JCM 5070 / NBRC 14893 / NCIMB 12804 / NRRL 8165 / MA-4680) protein is Putative hydro-lyase SAV_6940.